Consider the following 477-residue polypeptide: MQVLHVCSELFPLLKTGGLADVLGALPAAQIAEGVDTRVLLPGFPDLRRGVADAKVITRRDTFAGRISLLYGHFNGVGIYLIDAPHLYDRPGSPYHDTNLYAYADNVIRFALLGWVGSEMAAGLDPFWRPDIVHAHDWHAGLTPAYLAARGRPAKSVFTVHNLAYKGMFYAHHMDEIGLPWSMFNMNGLEFNGEISFLKAGLYYADHITAVSPTYAREITEPQFAYGLEGLLKQRHSEGRLSGILNGVDENIWNPAHDLLLASRYTRDTLEEKAENKRQLQIAMGLKVNDKVPLFAVVSRLTSQKGLDLVLEALPGLLEQGGQLALLGAGDPVLQEGFLAAAAEHPGQVGVQIGYHEAFSHRIMGGADVILVPSRFEPCGLTQLYGLKYGTLPLVRRTGGLADTVSDSSLENLADGIASGFVFEDSNAWSLLRAIRRAFVLWSRPSLWRFVQRQAMGMDFSWQVAAKSYRELYQRLL.

K15 is an ADP-alpha-D-glucose binding site.

It belongs to the glycosyltransferase 1 family. Bacterial/plant glycogen synthase subfamily.

The catalysed reaction is [(1-&gt;4)-alpha-D-glucosyl](n) + ADP-alpha-D-glucose = [(1-&gt;4)-alpha-D-glucosyl](n+1) + ADP + H(+). The protein operates within glycan biosynthesis; glycogen biosynthesis. Its function is as follows. Synthesizes alpha-1,4-glucan chains using ADP-glucose. This is Glycogen synthase from Cronobacter sakazakii (strain ATCC BAA-894) (Enterobacter sakazakii).